Consider the following 943-residue polypeptide: MTDYKATLNLPDTAFPMKAGLPQREPQILQRWDSIGLYQKLREIGKDRPKFVLHDGPPYANGKIHIGHALNKILKDMIVRSKTLAGFDAPYVPGWDCHGLPIEHKVEVTHGKHLSADRTRELCREYAAEQIEGQKTEFIRLGVLGDWDNPYKTMNFANEAGEIRALAEMVKQGFVFKGLKPVNWCFDCGSALAEAEVEYADKKSQTIDVAFPVADETKLAAAFGLASLAKPAAIVIWTTTPWTIPANQALNIHPEFKYALVDTGERLLVLAEELVESCLKRYNLEGSIIATAQGSALELINFRHPFYDRLSPIYLADYVELGAGTGVVHSAPAYGEDDFVTCKRYGMVNDDILTPVQSNGVYVESLPFFGGQFIWKANPAIVEKLSEVGALMHTETISHSYMHCWRHKTPLIYRATAQWFVGMDKQPTTGEPLRERALKAIEDTKFVPAWGQARLHSMIANRPDWCISRQRNWGVPIPFFLHKQTGELHPRTVELMEQVAKRVEQEGIEAWFKLDAAELLGVEADQYDKITDTLDVWFDSGTTHWHVLRGSHDIGHTTGPVADLYLEGSDQHRGWFHSSLLTGCAIDNHAPYRELLTHGFTVDENGRKMSKSLGNTIEPEKVNNTLGADILRLWVSATDYSGEMAVSEQILQRSADAYRRIRNTARFLLSNLSGFDPARDLLAPEDMLALDRWAVDRTLLLQRELEEHYSEYRFWNVYSKVHNFCVQELGGFYLDIIKDRQYTTGANSVARRSCQTALYHISEALVRWIAPILAFTADEIWQYLPGERNESVMLNGWYQGLSELPEGTELDRAYWDRVMAVKASVNKELENQRTAKVIGGNLQAEVTLYADEGLSADLGKLGDELRFVLITSAASVVPFAQAPAEAVATEVEGLKLKVVKSGHAKCGRCWHFRADVGSHPEHPEICSRCVDNLSGSGEVRHYA.

A 'HIGH' region motif is present at residues 58–68 (PYANGKIHIGH). Residue E567 participates in L-isoleucyl-5'-AMP binding. The short motif at 608 to 612 (KMSKS) is the 'KMSKS' region element. An ATP-binding site is contributed by K611. Residues C906, C909, C926, and C929 each coordinate Zn(2+).

Belongs to the class-I aminoacyl-tRNA synthetase family. IleS type 1 subfamily. As to quaternary structure, monomer. Zn(2+) is required as a cofactor.

The protein resides in the cytoplasm. The enzyme catalyses tRNA(Ile) + L-isoleucine + ATP = L-isoleucyl-tRNA(Ile) + AMP + diphosphate. Its function is as follows. Catalyzes the attachment of isoleucine to tRNA(Ile). As IleRS can inadvertently accommodate and process structurally similar amino acids such as valine, to avoid such errors it has two additional distinct tRNA(Ile)-dependent editing activities. One activity is designated as 'pretransfer' editing and involves the hydrolysis of activated Val-AMP. The other activity is designated 'posttransfer' editing and involves deacylation of mischarged Val-tRNA(Ile). This is Isoleucine--tRNA ligase from Pseudomonas putida (strain GB-1).